Reading from the N-terminus, the 253-residue chain is Phosphonates import ATP-binding protein PhnC (253 aa).

Residues 4–247 (VRFEGVTKRF…QAVAMIYRAG (244 aa)) form the ABC transporter domain. Residue 36-43 (GLSGSGKS) participates in ATP binding.

Belongs to the ABC transporter superfamily. Phosphonates importer (TC 3.A.1.9.1) family. As to quaternary structure, the complex is composed of two ATP-binding proteins (PhnC), two transmembrane proteins (PhnE) and a solute-binding protein (PhnD).

Its subcellular location is the cell membrane. It carries out the reaction phosphonate(out) + ATP + H2O = phosphonate(in) + ADP + phosphate + H(+). Its function is as follows. Part of the ABC transporter complex PhnCDE involved in phosphonates import. Responsible for energy coupling to the transport system. This chain is Phosphonates import ATP-binding protein PhnC, found in Frankia casuarinae (strain DSM 45818 / CECT 9043 / HFP020203 / CcI3).